A 100-amino-acid polypeptide reads, in one-letter code: Aspartyl/glutamyl-tRNA(Asn/Gln) amidotransferase subunit C (100 aa).

It belongs to the GatC family. In terms of assembly, heterotrimer of A, B and C subunits.

It carries out the reaction L-glutamyl-tRNA(Gln) + L-glutamine + ATP + H2O = L-glutaminyl-tRNA(Gln) + L-glutamate + ADP + phosphate + H(+). The enzyme catalyses L-aspartyl-tRNA(Asn) + L-glutamine + ATP + H2O = L-asparaginyl-tRNA(Asn) + L-glutamate + ADP + phosphate + 2 H(+). In terms of biological role, allows the formation of correctly charged Asn-tRNA(Asn) or Gln-tRNA(Gln) through the transamidation of misacylated Asp-tRNA(Asn) or Glu-tRNA(Gln) in organisms which lack either or both of asparaginyl-tRNA or glutaminyl-tRNA synthetases. The reaction takes place in the presence of glutamine and ATP through an activated phospho-Asp-tRNA(Asn) or phospho-Glu-tRNA(Gln). This chain is Aspartyl/glutamyl-tRNA(Asn/Gln) amidotransferase subunit C, found in Rickettsia felis (strain ATCC VR-1525 / URRWXCal2) (Rickettsia azadi).